The primary structure comprises 221 residues: Ribosomal RNA small subunit methyltransferase G (221 aa).

Residues G85, L90, A138–E139, and R151 contribute to the S-adenosyl-L-methionine site.

This sequence belongs to the methyltransferase superfamily. RNA methyltransferase RsmG family.

The protein resides in the cytoplasm. The enzyme catalyses guanosine(527) in 16S rRNA + S-adenosyl-L-methionine = N(7)-methylguanosine(527) in 16S rRNA + S-adenosyl-L-homocysteine. In terms of biological role, specifically methylates the N7 position of guanine in position 527 of 16S rRNA. The chain is Ribosomal RNA small subunit methyltransferase G from Caulobacter sp. (strain K31).